Consider the following 205-residue polypeptide: Anaerobic dimethyl sulfoxide reductase chain B (205 aa).

3 consecutive 4Fe-4S ferredoxin-type domains span residues 4–32, 57–89, and 90–119; these read YGFY…LGTE, NIFA…KNAD, and GFVI…YDAQ. Cysteine 13, cysteine 16, cysteine 19, cysteine 23, cysteine 67, cysteine 70, cysteine 75, cysteine 79, cysteine 99, cysteine 102, cysteine 105, cysteine 109, cysteine 126, cysteine 129, cysteine 141, and cysteine 145 together coordinate [4Fe-4S] cluster.

In terms of assembly, heterotrimeric enzyme composed of a catalytic heterodimer (DmsAB) and a membrane anchor protein (DmsC). The cofactor is [4Fe-4S] cluster.

In terms of biological role, electron transfer subunit of the terminal reductase during anaerobic growth on various sulfoxide and N-oxide compounds. The protein is Anaerobic dimethyl sulfoxide reductase chain B (dmsB) of Haemophilus influenzae (strain ATCC 51907 / DSM 11121 / KW20 / Rd).